We begin with the raw amino-acid sequence, 285 residues long: uncharacterized protein (285 aa).

Positions 1 to 25 are cleaved as a signal peptide; sequence MVKKWLIQFAVMLSVLSTFTYSASA.

This is an uncharacterized protein from Bacillus subtilis (strain 168).